The primary structure comprises 187 residues: Calcium and integrin-binding family member 2 (187 aa).

EF-hand domains are found at residues 66 to 101 (KENP…LSEM), 103 to 138 (PREL…LTKE), and 144 to 179 (EVNL…APDF). Residues aspartate 157, aspartate 159, aspartate 161, lysine 163, and aspartate 168 each contribute to the Ca(2+) site.

In terms of assembly, monomer. Homodimer. As to expression, enriched in central and striolar hair cells.

It localises to the cytoplasm. The protein localises to the cell projection. It is found in the stereocilium. Its subcellular location is the photoreceptor inner segment. The protein resides in the cilium. It localises to the photoreceptor outer segment. The protein localises to the cell membrane. It is found in the sarcolemma. In terms of biological role, calcium- and integrin-binding protein. Plays a role in intracellular calcium homeostasis. Critical for proper photoreceptor cell maintenance and function. Essential for development, maintenance and function of mechanosensory hair cells. The polypeptide is Calcium and integrin-binding family member 2 (Danio rerio (Zebrafish)).